A 218-amino-acid polypeptide reads, in one-letter code: ATP-dependent dethiobiotin synthetase BioD (218 aa).

Residue 10 to 15 (NAGKTT) participates in ATP binding. Threonine 14 is a Mg(2+) binding site. Lysine 35 is an active-site residue. Threonine 39 lines the substrate pocket. Mg(2+) is bound by residues histidine 52 and glutamate 116. ATP is bound by residues 116–119 (EGAG) and 176–177 (LR).

It belongs to the dethiobiotin synthetase family. As to quaternary structure, homodimer. The cofactor is Mg(2+).

The protein resides in the cytoplasm. It catalyses the reaction (7R,8S)-7,8-diammoniononanoate + CO2 + ATP = (4R,5S)-dethiobiotin + ADP + phosphate + 3 H(+). It participates in cofactor biosynthesis; biotin biosynthesis; biotin from 7,8-diaminononanoate: step 1/2. Catalyzes a mechanistically unusual reaction, the ATP-dependent insertion of CO2 between the N7 and N8 nitrogen atoms of 7,8-diaminopelargonic acid (DAPA, also called 7,8-diammoniononanoate) to form a ureido ring. This chain is ATP-dependent dethiobiotin synthetase BioD, found in Helicobacter pylori (strain Shi470).